The following is a 427-amino-acid chain: MDLLQQLQNQLNQFPSHTKLLLGFSGGLDSTVLLSLLAKLRKKQPHLSLRAIHIHHGLSQNADNWAIHCRQICQQLDISFLCEKVTINPRKGIEADAREARYQAIANHLQDNEILVTAHHQQDQTETFLLALKRGSGLQGLGAMQIQSVVFNLPIFRPLLHCTRQQLEQYAKTEKLSWIEDESNADNRYDRNFLRNDILPKLRQRWQHIDKAIQRSAQHCFEQQQLINELLNDEFNKIYDKFDRTLSIANFATYSILKQKALLRTWLQHLHILMPSTIQLDNIMRNMIQAQEDRNPTCKLGNQVLRRYQKRLYATPILQDLSHIRLDIQANECINLPDNLGEICLLTKNEHLQVTWQDKQILLPLTQEKIEIRFRYSGKVKLPQGFHQEMKKCWQDHNVPIWQRTRIPLIFYGDTFKSAVGFFDNFE.

25–30 (SGGLDS) is a binding site for ATP.

This sequence belongs to the tRNA(Ile)-lysidine synthase family.

The protein localises to the cytoplasm. The enzyme catalyses cytidine(34) in tRNA(Ile2) + L-lysine + ATP = lysidine(34) in tRNA(Ile2) + AMP + diphosphate + H(+). In terms of biological role, ligates lysine onto the cytidine present at position 34 of the AUA codon-specific tRNA(Ile) that contains the anticodon CAU, in an ATP-dependent manner. Cytidine is converted to lysidine, thus changing the amino acid specificity of the tRNA from methionine to isoleucine. This is tRNA(Ile)-lysidine synthase from Histophilus somni (strain 129Pt) (Haemophilus somnus).